Reading from the N-terminus, the 310-residue chain is MVKVYAPASSANMSVGFDVLGAAVIPVDGALLGDVVTVEAAETFGLNNLGRFADKLPSEPRENIVYQCWERFCQELGKQIPVAMTLEKNMPIGSGLGSSACSVVAALMAMNEHCGKPLNDTRLLALMGELEGRISGSIHYDNVAPCFLGGMQLMIEENDIISQQVPGFDEWLWVLAYPGIKVSTAEARAILPAQYRRQDCIAHGRHLAGFIHACYSRQPELAAKLMKDVIAEPYRERLLPGFRQARQAVAEIGAVASGISGSGPTLFALCDKPDTAQRVADWLGKNYLQNQEGFVHICRLDTAGARVLEN.

Residue 91-101 coordinates ATP; it reads PIGSGLGSSAC.

This sequence belongs to the GHMP kinase family. Homoserine kinase subfamily.

The protein resides in the cytoplasm. The enzyme catalyses L-homoserine + ATP = O-phospho-L-homoserine + ADP + H(+). It participates in amino-acid biosynthesis; L-threonine biosynthesis; L-threonine from L-aspartate: step 4/5. Catalyzes the ATP-dependent phosphorylation of L-homoserine to L-homoserine phosphate. This Escherichia coli (strain SE11) protein is Homoserine kinase.